Here is a 200-residue protein sequence, read N- to C-terminus: Protein RISC-INTERACTING CLEARING 3'-5' EXORIBONUCLEASE 1 (200 aa).

Oligomerization regions lie at residues S35 to W66, K102 to R127, and D166 to D173.

Belongs to the RICE family. Homohexamer with DnaQ-like exonuclease fold in a ring-shaped structure with a central cavity. Component of AGO1 and AGO10-centered RNA-induced silencing complexes (RISC). Interacts with and acts as a cofactor of AGO1 and AGO10. Ubiquitously expressed throughout development in germinating seeds, cotyledons, leaves and roots of young seedlings and adult plants, stems and inflorescence.

It localises to the cytoplasm. The catalysed reaction is Exonucleolytic cleavage in the 3'- to 5'-direction to yield nucleoside 5'-phosphates.. In terms of biological role, 3'-to-5' exoribonuclease (RNase) specifically targeting single-stranded RNAs. Triggers miRNA accumulation in RNA-induced silencing complex (RISC), composed of miRNAs and AGO proteins, by degrading uridylated cleavage fragments. Required during plant growth and development. This is Protein RISC-INTERACTING CLEARING 3'-5' EXORIBONUCLEASE 1 from Arabidopsis thaliana (Mouse-ear cress).